Here is a 128-residue protein sequence, read N- to C-terminus: Sulfurtransferase TusD (128 aa).

The Cysteine persulfide intermediate role is filled by Cys78.

It belongs to the DsrE/TusD family. In terms of assembly, heterohexamer, formed by a dimer of trimers. The hexameric TusBCD complex contains 2 copies each of TusB, TusC and TusD. The TusBCD complex interacts with TusE.

Its subcellular location is the cytoplasm. Functionally, part of a sulfur-relay system required for 2-thiolation of 5-methylaminomethyl-2-thiouridine (mnm(5)s(2)U) at tRNA wobble positions. Accepts sulfur from TusA and transfers it in turn to TusE. This is Sulfurtransferase TusD from Enterobacter sp. (strain 638).